The following is a 394-amino-acid chain: Cell division protein FtsZ (394 aa).

Residues 21–25 (GGGGN), 108–110 (GTG), Glu-139, Arg-143, and Asp-187 each bind GTP.

Belongs to the FtsZ family. In terms of assembly, homodimer. Polymerizes to form a dynamic ring structure in a strictly GTP-dependent manner. Interacts directly with several other division proteins.

It localises to the cytoplasm. Functionally, essential cell division protein that forms a contractile ring structure (Z ring) at the future cell division site. The regulation of the ring assembly controls the timing and the location of cell division. One of the functions of the FtsZ ring is to recruit other cell division proteins to the septum to produce a new cell wall between the dividing cells. Binds GTP and shows GTPase activity. This Azotobacter vinelandii protein is Cell division protein FtsZ.